Consider the following 128-residue polypeptide: Protein Wnt-8 (128 aa).

A lipid anchor (O-palmitoleoyl serine) is attached at serine 1. 2 disulfides stabilise this stretch: cysteine 71–cysteine 109 and cysteine 87–cysteine 102. 2 N-linked (GlcNAc...) asparagine glycosylation sites follow: asparagine 74 and asparagine 93.

The protein belongs to the Wnt family. Post-translationally, palmitoleoylation is required for efficient binding to frizzled receptors. Depalmitoleoylation leads to Wnt signaling pathway inhibition. Proteolytic processing by tiki1 and tiki2 promotes oxidation and formation of large disulfide-bond oligomers, leading to inactivation of wnt8.

It is found in the secreted. It localises to the extracellular space. The protein localises to the extracellular matrix. In terms of biological role, ligand for members of the frizzled family of seven transmembrane receptors. Probable developmental protein. May be a signaling molecule which affects the development of discrete regions of tissues. Is likely to signal over only few cell diameters. In Thunnus thynnus (Atlantic bluefin tuna), this protein is Protein Wnt-8 (wnt8).